Here is a 194-residue protein sequence, read N- to C-terminus: MQRVSRLKREMQLLTAEPPPGVSCWQSEGRLDELQAQIVGGANTPYEGGVFTLEINIPERYPFEPPKMRFLTPIYHPNIDNAGRICLDALKLPPKGAWRPSLNISTVLTSIQLLMAEPNPDDPLMADISSEFKYNKPLYLEKAKKWTAEHAIQKNKGCVETDGKTPENKNLKTSHKREALSAQENLEHTKKVCL.

Residues Gln2–Ile152 enclose the UBC core domain. Residue Cys86 is the Glycyl thioester intermediate of the active site. 2 stretches are compositionally biased toward basic and acidic residues: residues Cys158–Asn170 and Asn185–Leu194. Residues Cys158–Leu194 form a disordered region.

The protein belongs to the ubiquitin-conjugating enzyme family.

The protein localises to the nucleus. The enzyme catalyses S-ubiquitinyl-[E1 ubiquitin-activating enzyme]-L-cysteine + [E2 ubiquitin-conjugating enzyme]-L-cysteine = [E1 ubiquitin-activating enzyme]-L-cysteine + S-ubiquitinyl-[E2 ubiquitin-conjugating enzyme]-L-cysteine.. Its pathway is protein modification; protein ubiquitination. In terms of biological role, accepts ubiquitin from the E1 complex and catalyzes its covalent attachment to other proteins. Catalyzes monoubiquitination. Involved in DNA repair. This chain is Ubiquitin-conjugating enzyme E2 T (ube2t), found in Danio rerio (Zebrafish).